The sequence spans 382 residues: D-galactonate dehydratase (382 aa).

Asp-183 provides a ligand contact to Mg(2+). The active-site Proton donor is His-185. Mg(2+) is bound by residues Glu-209 and Glu-235. His-285 acts as the Proton acceptor in catalysis.

It belongs to the mandelate racemase/muconate lactonizing enzyme family. GalD subfamily. Requires Mg(2+) as cofactor.

The enzyme catalyses D-galactonate = 2-dehydro-3-deoxy-D-galactonate + H2O. Its pathway is carbohydrate acid metabolism; D-galactonate degradation; D-glyceraldehyde 3-phosphate and pyruvate from D-galactonate: step 1/3. Catalyzes the dehydration of D-galactonate to 2-keto-3-deoxy-D-galactonate. The sequence is that of D-galactonate dehydratase from Escherichia coli (strain UTI89 / UPEC).